A 657-amino-acid chain; its full sequence is Probable potassium transport system protein Kup (657 aa).

12 consecutive transmembrane segments (helical) span residues 14-34, 47-67, 96-116, 140-160, 166-186, 201-221, 242-262, 283-303, 340-360, 371-391, 396-416, and 425-445; these read IGGL…SPLY, ADIV…QTTI, IQWL…DGII, TIVY…QFGT, FFAP…FIQI, AYHL…VFLC, ISWI…AAYL, LIMP…AAVI, LYIP…VLHF, GLAI…YLIM, LYFM…FLIA, and GYVT…WYLA.

The protein belongs to the HAK/KUP transporter (TC 2.A.72) family.

The protein localises to the cell inner membrane. It catalyses the reaction K(+)(in) + H(+)(in) = K(+)(out) + H(+)(out). Its function is as follows. Transport of potassium into the cell. Likely operates as a K(+):H(+) symporter. The protein is Probable potassium transport system protein Kup of Flavobacterium johnsoniae (strain ATCC 17061 / DSM 2064 / JCM 8514 / BCRC 14874 / CCUG 350202 / NBRC 14942 / NCIMB 11054 / UW101) (Cytophaga johnsonae).